The sequence spans 779 residues: Probable phosphoketolase 2 (779 aa).

It belongs to the XFP family. It depends on thiamine diphosphate as a cofactor.

The chain is Probable phosphoketolase 2 from Rhizobium meliloti (strain 1021) (Ensifer meliloti).